The chain runs to 300 residues: N-acetylmuramic acid 6-phosphate etherase (300 aa).

Residues 57 to 220 (ITHAFAHGGR…TSGAMIRSGK (164 aa)) enclose the SIS domain. Glu85 functions as the Proton donor in the catalytic mechanism. Residue Glu116 is part of the active site.

It belongs to the GCKR-like family. MurNAc-6-P etherase subfamily. Homodimer.

The catalysed reaction is N-acetyl-D-muramate 6-phosphate + H2O = N-acetyl-D-glucosamine 6-phosphate + (R)-lactate. It participates in amino-sugar metabolism; 1,6-anhydro-N-acetylmuramate degradation. Its pathway is amino-sugar metabolism; N-acetylmuramate degradation. It functions in the pathway cell wall biogenesis; peptidoglycan recycling. In terms of biological role, specifically catalyzes the cleavage of the D-lactyl ether substituent of MurNAc 6-phosphate, producing GlcNAc 6-phosphate and D-lactate. Together with AnmK, is also required for the utilization of anhydro-N-acetylmuramic acid (anhMurNAc) either imported from the medium or derived from its own cell wall murein, and thus plays a role in cell wall recycling. In Vibrio vulnificus (strain CMCP6), this protein is N-acetylmuramic acid 6-phosphate etherase.